A 274-amino-acid polypeptide reads, in one-letter code: Putative ankyrin repeat protein R597 (274 aa).

ANK repeat units lie at residues 78 to 112 (VGLP…NNND), 114 to 144 (PISE…SLKI), 146 to 174 (SRYH…DIQG), and 176 to 205 (NLSY…NIND).

This is Putative ankyrin repeat protein R597 from Acanthamoeba polyphaga mimivirus (APMV).